The sequence spans 292 residues: Ribosomal protein L11 methyltransferase (292 aa).

The S-adenosyl-L-methionine site is built by T136, G159, D181, and N228.

The protein belongs to the methyltransferase superfamily. PrmA family.

Its subcellular location is the cytoplasm. It carries out the reaction L-lysyl-[protein] + 3 S-adenosyl-L-methionine = N(6),N(6),N(6)-trimethyl-L-lysyl-[protein] + 3 S-adenosyl-L-homocysteine + 3 H(+). Functionally, methylates ribosomal protein L11. This chain is Ribosomal protein L11 methyltransferase, found in Agrobacterium fabrum (strain C58 / ATCC 33970) (Agrobacterium tumefaciens (strain C58)).